Here is a 728-residue protein sequence, read N- to C-terminus: Catalase-peroxidase (728 aa).

The segment at residues W91–Y218 is a cross-link (tryptophyl-tyrosyl-methioninium (Trp-Tyr) (with M-244)). The Proton acceptor role is filled by H92. A cross-link (tryptophyl-tyrosyl-methioninium (Tyr-Met) (with W-91)) is located at residues Y218–M244. H259 provides a ligand contact to heme b.

This sequence belongs to the peroxidase family. Peroxidase/catalase subfamily. Homodimer or homotetramer. The cofactor is heme b. In terms of processing, formation of the three residue Trp-Tyr-Met cross-link is important for the catalase, but not the peroxidase activity of the enzyme.

It catalyses the reaction H2O2 + AH2 = A + 2 H2O. It carries out the reaction 2 H2O2 = O2 + 2 H2O. Functionally, bifunctional enzyme with both catalase and broad-spectrum peroxidase activity. The protein is Catalase-peroxidase of Burkholderia multivorans (strain ATCC 17616 / 249).